A 577-amino-acid polypeptide reads, in one-letter code: Phosphoethanolamine transferase CptA (577 aa).

5 consecutive transmembrane segments (helical) span residues 17-37, 45-65, 69-89, 119-139, and 154-174; these read LGWA…IIYL, GLRD…LFPG, VIAA…LSYY, YFSL…ILLW, and LVSF…NTFI.

The protein belongs to the phosphoethanolamine transferase family. EptC/CptA subfamily.

It is found in the cell inner membrane. The protein operates within bacterial outer membrane biogenesis; LPS core biosynthesis. In terms of biological role, catalyzes the addition of a phosphoethanolamine moiety to the outer membrane lipopolysaccharide core. This chain is Phosphoethanolamine transferase CptA (cptA), found in Salmonella typhimurium (strain LT2 / SGSC1412 / ATCC 700720).